The sequence spans 252 residues: Zinc finger CCCH domain-containing protein 28 (252 aa).

Residues 1-21 show a composition bias toward basic and acidic residues; it reads MSHRRDYGSDAVHVRITHDPP. The segment at 1 to 31 is disordered; it reads MSHRRDYGSDAVHVRITHDPPPENCFPNSGD. 2 consecutive C3H1-type zinc fingers follow at residues 71-99 and 143-171; these read FFKT…HSAE and NWKT…HGPS.

This chain is Zinc finger CCCH domain-containing protein 28, found in Arabidopsis thaliana (Mouse-ear cress).